The sequence spans 353 residues: Photosystem II D2 protein (353 aa).

Threonine 2 bears the N-acetylthreonine mark. Threonine 2 carries the post-translational modification Phosphothreonine. A helical membrane pass occupies residues 41 to 61 (CAYFAVGGWFTGTTFVTSWYT). Histidine 118 serves as a coordination point for chlorophyll a. Residues 125–141 (GFMLRQFELARSVQLRP) traverse the membrane as a helical segment. Residues glutamine 130 and asparagine 143 each contribute to the pheophytin a site. Residues 153-166 (VFVSVFLIYPLGQS) form a helical membrane-spanning segment. Residue histidine 198 coordinates chlorophyll a. The chain crosses the membrane as a helical span at residues 208 to 228 (AALLCAIHGATVENTLFEDGD). A plastoquinone contacts are provided by histidine 215 and phenylalanine 262. Histidine 215 serves as a coordination point for Fe cation. Histidine 269 is a binding site for Fe cation. Residues 279 to 295 (GLWMSALGVVGLALNLR) traverse the membrane as a helical segment.

The protein belongs to the reaction center PufL/M/PsbA/D family. In terms of assembly, PSII is composed of 1 copy each of membrane proteins PsbA, PsbB, PsbC, PsbD, PsbE, PsbF, PsbH, PsbI, PsbJ, PsbK, PsbL, PsbM, PsbT, PsbX, PsbY, PsbZ, Psb30/Ycf12, at least 3 peripheral proteins of the oxygen-evolving complex and a large number of cofactors. It forms dimeric complexes. The cofactor is The D1/D2 heterodimer binds P680, chlorophylls that are the primary electron donor of PSII, and subsequent electron acceptors. It shares a non-heme iron and each subunit binds pheophytin, quinone, additional chlorophylls, carotenoids and lipids. There is also a Cl(-1) ion associated with D1 and D2, which is required for oxygen evolution. The PSII complex binds additional chlorophylls, carotenoids and specific lipids..

The protein localises to the plastid. It is found in the chloroplast thylakoid membrane. The catalysed reaction is 2 a plastoquinone + 4 hnu + 2 H2O = 2 a plastoquinol + O2. Functionally, photosystem II (PSII) is a light-driven water:plastoquinone oxidoreductase that uses light energy to abstract electrons from H(2)O, generating O(2) and a proton gradient subsequently used for ATP formation. It consists of a core antenna complex that captures photons, and an electron transfer chain that converts photonic excitation into a charge separation. The D1/D2 (PsbA/PsbD) reaction center heterodimer binds P680, the primary electron donor of PSII as well as several subsequent electron acceptors. D2 is needed for assembly of a stable PSII complex. The protein is Photosystem II D2 protein of Nicotiana tabacum (Common tobacco).